A 179-amino-acid chain; its full sequence is Large ribosomal subunit protein uL5 (179 aa).

It belongs to the universal ribosomal protein uL5 family. As to quaternary structure, part of the 50S ribosomal subunit; part of the 5S rRNA/L5/L18/L25 subcomplex. Contacts the 5S rRNA and the P site tRNA. Forms a bridge to the 30S subunit in the 70S ribosome.

In terms of biological role, this is one of the proteins that bind and probably mediate the attachment of the 5S RNA into the large ribosomal subunit, where it forms part of the central protuberance. In the 70S ribosome it contacts protein S13 of the 30S subunit (bridge B1b), connecting the 2 subunits; this bridge is implicated in subunit movement. Contacts the P site tRNA; the 5S rRNA and some of its associated proteins might help stabilize positioning of ribosome-bound tRNAs. In Rickettsia peacockii (strain Rustic), this protein is Large ribosomal subunit protein uL5.